Reading from the N-terminus, the 178-residue chain is Neuroblastoma suppressor of tumorigenicity 1 (178 aa).

The signal sequence occupies residues 1-16 (MLWVLVGAVLPVMLLA). 5 cysteine pairs are disulfide-bonded: Cys-34-Cys-84, Cys-48-Cys-98, Cys-58-Cys-117, Cys-62-Cys-119, and Cys-81-Cys-122. One can recognise a CTCK domain in the interval 34 to 123 (CEAKNITQIV…IVHCSCQACG (90 aa)). The segment at 132 to 178 (NVYVQGEDSPGSQPGPHSHAHPHPGGQTPEPEEPPGAPQVEEEGAED) is disordered. Residues 140 to 160 (SPGSQPGPHSHAHPHPGGQTP) are compositionally biased toward low complexity.

This sequence belongs to the DAN family. In terms of assembly, homodimer.

It is found in the secreted. In terms of biological role, possible candidate as a tumor suppressor gene of neuroblastoma. May play an important role in preventing cells from entering the final stage (G1/S) of the transformation process. This Mus musculus (Mouse) protein is Neuroblastoma suppressor of tumorigenicity 1 (Nbl1).